The following is a 219-amino-acid chain: Adenylate kinase (219 aa).

13–18 (GAGKGT) is a binding site for ATP. The tract at residues 33-62 (STGDIFRAAIKNETKMGLEAKKYIDAGNLV) is NMP. Residues Thr-34, Arg-39, 60–62 (NLV), 88–91 (GYPR), and Gln-95 each bind AMP. Residues 129–167 (GRFICRTCGATYHKLYNKPKVEGTCDVCGGHDFYQRDDD) are LID. Arg-130 contacts ATP. Residues Cys-133 and Cys-136 each coordinate Zn(2+). 139–140 (TY) serves as a coordination point for ATP. Residues Cys-153 and Cys-156 each contribute to the Zn(2+) site. Residues Arg-164 and Arg-175 each coordinate AMP. Residue Arg-203 participates in ATP binding.

The protein belongs to the adenylate kinase family. As to quaternary structure, monomer.

It localises to the cytoplasm. It catalyses the reaction AMP + ATP = 2 ADP. The protein operates within purine metabolism; AMP biosynthesis via salvage pathway; AMP from ADP: step 1/1. Its function is as follows. Catalyzes the reversible transfer of the terminal phosphate group between ATP and AMP. Plays an important role in cellular energy homeostasis and in adenine nucleotide metabolism. This is Adenylate kinase from Lactiplantibacillus plantarum (strain ATCC BAA-793 / NCIMB 8826 / WCFS1) (Lactobacillus plantarum).